The following is a 103-amino-acid chain: Co-chaperonin GroES (103 aa).

It belongs to the GroES chaperonin family. In terms of assembly, heptamer of 7 subunits arranged in a ring. Interacts with the chaperonin GroEL.

The protein resides in the cytoplasm. Its function is as follows. Together with the chaperonin GroEL, plays an essential role in assisting protein folding. The GroEL-GroES system forms a nano-cage that allows encapsulation of the non-native substrate proteins and provides a physical environment optimized to promote and accelerate protein folding. GroES binds to the apical surface of the GroEL ring, thereby capping the opening of the GroEL channel. The protein is Co-chaperonin GroES of Nostoc sp. (strain PCC 7120 / SAG 25.82 / UTEX 2576).